The primary structure comprises 161 residues: Protein shisa-like-2B (161 aa).

The helical transmembrane segment at 65-85 (IGALIGLGIAALVLLAFVISV) threads the bilayer. The tract at residues 115–134 (QEGNSNRKSKAPRSNAASNS) is disordered.

The protein belongs to the shisa family.

The protein resides in the membrane. The polypeptide is Protein shisa-like-2B (SHISAL2B) (Bos taurus (Bovine)).